The chain runs to 176 residues: Photosystem I assembly protein Ycf4 (176 aa).

2 helical membrane passes run 22–42 (FVWA…GTAS) and 48–68 (LIAF…GLFI).

It belongs to the Ycf4 family.

The protein localises to the plastid thylakoid membrane. Seems to be required for the assembly of the photosystem I complex. This is Photosystem I assembly protein Ycf4 from Cuscuta gronovii (Common dodder).